Consider the following 375-residue polypeptide: uncharacterized protein (375 aa).

Lys-99 is covalently cross-linked (Isoglutamyl lysine isopeptide (Lys-Gln) (interchain with Q-Cter in protein Pup)).

This sequence belongs to the IMPDH/GMPR family.

This is an uncharacterized protein from Mycolicibacterium smegmatis (strain ATCC 700084 / mc(2)155) (Mycobacterium smegmatis).